Here is a 339-residue protein sequence, read N- to C-terminus: D-erythrose-4-phosphate dehydrogenase (339 aa).

12 to 13 (RI) serves as a coordination point for NAD(+). Substrate is bound by residues 154-156 (SCT), arginine 200, 213-214 (TK), and arginine 236. Cysteine 155 functions as the Nucleophile in the catalytic mechanism. Asparagine 318 lines the NAD(+) pocket.

The protein belongs to the glyceraldehyde-3-phosphate dehydrogenase family. Epd subfamily. As to quaternary structure, homotetramer.

The protein localises to the cytoplasm. It catalyses the reaction D-erythrose 4-phosphate + NAD(+) + H2O = 4-phospho-D-erythronate + NADH + 2 H(+). It functions in the pathway cofactor biosynthesis; pyridoxine 5'-phosphate biosynthesis; pyridoxine 5'-phosphate from D-erythrose 4-phosphate: step 1/5. In terms of biological role, catalyzes the NAD-dependent conversion of D-erythrose 4-phosphate to 4-phosphoerythronate. The sequence is that of D-erythrose-4-phosphate dehydrogenase from Proteus mirabilis (strain HI4320).